We begin with the raw amino-acid sequence, 396 residues long: Elongation factor Tu (396 aa).

The region spanning 10–206 (KPHVNVGTIG…ALDTYIPTPE (197 aa)) is the tr-type G domain. Positions 19–26 (GHVDHGKT) are G1. Position 19-26 (19-26 (GHVDHGKT)) interacts with GTP. T26 serves as a coordination point for Mg(2+). The tract at residues 60-64 (GITIN) is G2. The G3 stretch occupies residues 81–84 (DCPG). Residues 81–85 (DCPGH) and 136–139 (NKCD) each bind GTP. A G4 region spans residues 136-139 (NKCD). The interval 174–176 (SAK) is G5.

Belongs to the TRAFAC class translation factor GTPase superfamily. Classic translation factor GTPase family. EF-Tu/EF-1A subfamily. In terms of assembly, monomer.

It localises to the cytoplasm. The catalysed reaction is GTP + H2O = GDP + phosphate + H(+). Functionally, GTP hydrolase that promotes the GTP-dependent binding of aminoacyl-tRNA to the A-site of ribosomes during protein biosynthesis. In Paraburkholderia xenovorans (strain LB400), this protein is Elongation factor Tu.